The following is a 420-amino-acid chain: Putative T-box protein 33 (420 aa).

Residues 93–291 constitute a DNA-binding region (T-box); sequence LWKELHYLSN…ANPTSRGDAK (199 aa). Residues 395 to 412 show a composition bias toward polar residues; sequence SPPLQPTATSPEASQNQI. Positions 395 to 420 are disordered; sequence SPPLQPTATSPEASQNQIKLEMNQYM.

It is found in the nucleus. This is Putative T-box protein 33 (tbx-33) from Caenorhabditis elegans.